An 89-amino-acid chain; its full sequence is Small ribosomal subunit protein uS15 (89 aa).

The protein belongs to the universal ribosomal protein uS15 family. As to quaternary structure, part of the 30S ribosomal subunit. Forms a bridge to the 50S subunit in the 70S ribosome, contacting the 23S rRNA.

In terms of biological role, one of the primary rRNA binding proteins, it binds directly to 16S rRNA where it helps nucleate assembly of the platform of the 30S subunit by binding and bridging several RNA helices of the 16S rRNA. Forms an intersubunit bridge (bridge B4) with the 23S rRNA of the 50S subunit in the ribosome. The protein is Small ribosomal subunit protein uS15 of Burkholderia mallei (strain NCTC 10247).